A 792-amino-acid polypeptide reads, in one-letter code: Lon protease (792 aa).

The Lon N-terminal domain occupies 16 to 208 (LPILPLRETV…KVTYYLTREL (193 aa)). 360–367 (GPPGVGKT) lines the ATP pocket. The Lon proteolytic domain occupies 597–778 (KDEVGVATGL…DEVLNLALLE (182 aa)). Active-site residues include Ser684 and Lys727.

It belongs to the peptidase S16 family. In terms of assembly, homohexamer. Organized in a ring with a central cavity.

It is found in the cytoplasm. The catalysed reaction is Hydrolysis of proteins in presence of ATP.. Its function is as follows. ATP-dependent serine protease that mediates the selective degradation of mutant and abnormal proteins as well as certain short-lived regulatory proteins. Required for cellular homeostasis and for survival from DNA damage and developmental changes induced by stress. Degrades polypeptides processively to yield small peptide fragments that are 5 to 10 amino acids long. Binds to DNA in a double-stranded, site-specific manner. In Dictyoglomus thermophilum (strain ATCC 35947 / DSM 3960 / H-6-12), this protein is Lon protease.